A 478-amino-acid chain; its full sequence is H(+)/Cl(-) exchange transporter ClcA (478 aa).

Topologically, residues 1–32 (MTHSTQQLSPEGVAEGKRGRLIRELVNRDKTP) are cytoplasmic. A helical membrane pass occupies residues 33 to 69 (LIILIMAAVVGVVTGLLGVAFDRGVDWVQQQRLLALA). The Periplasmic portion of the chain corresponds to 70–76 (NVADYAL). A helical transmembrane segment spans residues 77-100 (LVWPLAFIMSALLAMMGYFLVSRF). The Selectivity filter part_1 motif lies at 106-110 (GSGIP). Ser-107 serves as a coordination point for chloride. The segment at residues 109–116 (IPEIEGAM) is an intramembrane region (helical). The Cytoplasmic portion of the chain corresponds to 117–123 (EEMRPVR). A run of 2 helical transmembrane segments spans residues 124 to 141 (WWRV…TLGA) and 148 to 166 (EGPM…VDIF). Residues 146–150 (GREGP) carry the Selectivity filter part_2 motif. Over 167 to 176 (RLRSPEARHS) the chain is Cytoplasmic. Intramembrane regions (helical) lie at residues 177 to 189 (LLAT…LSAA) and 193 to 201 (PLAGILFVI). At 202-214 (EEMRSQFRYSLVS) the chain is on the cytoplasmic side. The chain crosses the membrane as a helical span at residues 215–232 (IKAVFIGVITSTIVYRYF). Over 233–252 (NGERAIIEVGKLSDAPLNTL) the chain is Periplasmic. The helical transmembrane segment at 253–281 (WLYLLLGIIFGAVGVIFNALIFRTQDMFV) threads the bilayer. Over 282–287 (RFHGGD) the chain is Cytoplasmic. The helical transmembrane segment at 288–309 (WRKLVLIGGLLGGMCGLLALLH) threads the bilayer. Residues 310 to 329 (GNAVGGGFALIPIAAAGNFS) are Periplasmic-facing. Transmembrane regions (helical) follow at residues 330–349 (IGML…LCFG) and 355–376 (GIFA…LSCA). The short motif at 355 to 359 (GIFAP) is the Selectivity filter part_3 element. Residues Ile-356 and Phe-357 each coordinate chloride. Topologically, residues 377 to 386 (HFFPQYGIEA) are periplasmic. An intramembrane region (helical) is located at residues 387 to 401 (GTFAIAGMGALFAAS). The segment at residues 402–404 (VRA) is an intramembrane region (note=Loop between two helices). The segment at residues 405–416 (PLTGIVLVLEMT) is an intramembrane region (helical). The segment at residues 417 to 421 (DNYQL) is an intramembrane region (note=Loop between two helices). Residues 422–438 (ILPMIVTCLGATLIAQF) form a helical membrane-spanning segment. Residues 439 to 478 (MGGKPLYSAILARTLAKQEQARATVIAQEPAVENTPQIGK) lie on the Cytoplasmic side of the membrane. Tyr-445 contributes to the chloride binding site.

It belongs to the chloride channel (TC 2.A.49) family. ClcA subfamily. In terms of assembly, homodimer.

Its subcellular location is the cell inner membrane. The catalysed reaction is 2 chloride(in) + H(+)(out) = 2 chloride(out) + H(+)(in). Functionally, proton-coupled chloride transporter. Functions as antiport system and exchanges two chloride ions for 1 proton. Probably acts as an electrical shunt for an outwardly-directed proton pump that is linked to amino acid decarboxylation, as part of the extreme acid resistance (XAR) response. The polypeptide is H(+)/Cl(-) exchange transporter ClcA (Yersinia pestis bv. Antiqua (strain Antiqua)).